The sequence spans 660 residues: Bifunctional polymyxin resistance protein ArnA (660 aa).

Residues 1–304 are formyltransferase ArnAFT; it reads MKTVVFAYHD…TLGLVQGSRL (304 aa). Position 86–88 (86–88) interacts with (6R)-10-formyltetrahydrofolate; sequence HLI. Catalysis depends on His-104, which acts as the Proton donor; for formyltransferase activity. Residues Arg-114 and 136 to 140 contribute to the (6R)-10-formyltetrahydrofolate site; that span reads VKRAD. Residues 314–660 form a dehydrogenase ArnADH region; that stretch reads RRTRVLILGV…RTVDLTDKPS (347 aa). Residues Asp-347 and 368–369 each bind NAD(+); that span reads DI. UDP-alpha-D-glucuronate is bound by residues Ala-393, Tyr-398, and 432–433; that span reads TS. Glu-434 serves as the catalytic Proton acceptor; for decarboxylase activity. Residues Arg-460, Asn-492, 526 to 535, and Tyr-613 each bind UDP-alpha-D-glucuronate; that span reads KLIDGGKQKR. Arg-619 acts as the Proton donor; for decarboxylase activity in catalysis.

In the N-terminal section; belongs to the Fmt family. UDP-L-Ara4N formyltransferase subfamily. It in the C-terminal section; belongs to the NAD(P)-dependent epimerase/dehydratase family. UDP-glucuronic acid decarboxylase subfamily. In terms of assembly, homohexamer, formed by a dimer of trimers.

It catalyses the reaction UDP-alpha-D-glucuronate + NAD(+) = UDP-beta-L-threo-pentopyranos-4-ulose + CO2 + NADH. It carries out the reaction UDP-4-amino-4-deoxy-beta-L-arabinose + (6R)-10-formyltetrahydrofolate = UDP-4-deoxy-4-formamido-beta-L-arabinose + (6S)-5,6,7,8-tetrahydrofolate + H(+). Its pathway is nucleotide-sugar biosynthesis; UDP-4-deoxy-4-formamido-beta-L-arabinose biosynthesis; UDP-4-deoxy-4-formamido-beta-L-arabinose from UDP-alpha-D-glucuronate: step 1/3. The protein operates within nucleotide-sugar biosynthesis; UDP-4-deoxy-4-formamido-beta-L-arabinose biosynthesis; UDP-4-deoxy-4-formamido-beta-L-arabinose from UDP-alpha-D-glucuronate: step 3/3. It participates in bacterial outer membrane biogenesis; lipopolysaccharide biosynthesis. Bifunctional enzyme that catalyzes the oxidative decarboxylation of UDP-glucuronic acid (UDP-GlcUA) to UDP-4-keto-arabinose (UDP-Ara4O) and the addition of a formyl group to UDP-4-amino-4-deoxy-L-arabinose (UDP-L-Ara4N) to form UDP-L-4-formamido-arabinose (UDP-L-Ara4FN). The modified arabinose is attached to lipid A and is required for resistance to polymyxin and cationic antimicrobial peptides. The chain is Bifunctional polymyxin resistance protein ArnA from Escherichia coli O9:H4 (strain HS).